The sequence spans 97 residues: UPF0250 protein HD_2015 (97 aa).

Belongs to the UPF0250 family.

The chain is UPF0250 protein HD_2015 from Haemophilus ducreyi (strain 35000HP / ATCC 700724).